The chain runs to 403 residues: Na(+)-translocating NADH-quinone reductase subunit B (403 aa).

Helical transmembrane passes span 56-76 (IMIM…YNIG), 114-134 (LAMF…TFIV), and 165-185 (LPAT…VVIA). Threonine 231 is modified (FMN phosphoryl threonine). 5 helical membrane passes run 260 to 280 (GSVG…IIYM), 287 to 307 (IVLG…VIGS), 312 to 332 (MFAM…GMFF), 348 to 368 (WAYG…NPAF), and 371 to 391 (GMML…YFVA).

Belongs to the NqrB/RnfD family. In terms of assembly, composed of six subunits; NqrA, NqrB, NqrC, NqrD, NqrE and NqrF. It depends on FMN as a cofactor.

The protein localises to the cell inner membrane. It carries out the reaction a ubiquinone + n Na(+)(in) + NADH + H(+) = a ubiquinol + n Na(+)(out) + NAD(+). In terms of biological role, NQR complex catalyzes the reduction of ubiquinone-1 to ubiquinol by two successive reactions, coupled with the transport of Na(+) ions from the cytoplasm to the periplasm. NqrA to NqrE are probably involved in the second step, the conversion of ubisemiquinone to ubiquinol. In Pseudoalteromonas atlantica (strain T6c / ATCC BAA-1087), this protein is Na(+)-translocating NADH-quinone reductase subunit B.